The following is a 419-amino-acid chain: CinA-like protein (419 aa).

Belongs to the CinA family.

This chain is CinA-like protein, found in Picosynechococcus sp. (strain ATCC 27264 / PCC 7002 / PR-6) (Agmenellum quadruplicatum).